Consider the following 295-residue polypeptide: GATA zinc finger domain-containing protein 23 (295 aa).

The span at 115-126 (ASTSKTATSKNV) shows a compositional bias: low complexity. Residues 115-240 (ASTSKTATSK…KRGRPSKIQP (126 aa)) are disordered. Residues 127 to 145 (ISNIENNTNKSQPLESNDL) are compositionally biased toward polar residues. Low complexity predominate over residues 146–163 (TPPSSKSSNSSPSTSPSK). A compositionally biased stretch (basic residues) spans 164–174 (RVSKSKTRVTK). Residues 181 to 227 (STSSSGETENLTTTSTADTTATTDTADTTDGTNTRTSNTSSDDTTTE) show a composition bias toward low complexity. The segment at residues 229–241 (TKKRGRPSKIQPD) is a DNA-binding region (a.T hook). Residues 243–270 (CYVCRRTFTSYWRKGIFNDQNEDLCNPC) form a GATA-type zinc finger.

In Dictyostelium discoideum (Social amoeba), this protein is GATA zinc finger domain-containing protein 23 (gtaW).